The sequence spans 252 residues: Thiazole synthase (252 aa).

Catalysis depends on Lys98, which acts as the Schiff-base intermediate with DXP. Residues Gly159, 185 to 186 (AG), and 207 to 208 (AT) each bind 1-deoxy-D-xylulose 5-phosphate.

The protein belongs to the ThiG family. In terms of assembly, homotetramer. Forms heterodimers with either ThiH or ThiS.

It localises to the cytoplasm. The enzyme catalyses [ThiS sulfur-carrier protein]-C-terminal-Gly-aminoethanethioate + 2-iminoacetate + 1-deoxy-D-xylulose 5-phosphate = [ThiS sulfur-carrier protein]-C-terminal Gly-Gly + 2-[(2R,5Z)-2-carboxy-4-methylthiazol-5(2H)-ylidene]ethyl phosphate + 2 H2O + H(+). It functions in the pathway cofactor biosynthesis; thiamine diphosphate biosynthesis. Catalyzes the rearrangement of 1-deoxy-D-xylulose 5-phosphate (DXP) to produce the thiazole phosphate moiety of thiamine. Sulfur is provided by the thiocarboxylate moiety of the carrier protein ThiS. In vitro, sulfur can be provided by H(2)S. The chain is Thiazole synthase from Mycobacterium avium (strain 104).